The sequence spans 353 residues: Paraneoplastic antigen Ma1 homolog (353 aa).

This sequence belongs to the PNMA family. Testis and brain specific.

The protein resides in the nucleus. It is found in the nucleolus. This Rattus norvegicus (Rat) protein is Paraneoplastic antigen Ma1 homolog (Pnma1).